The primary structure comprises 360 residues: Acetylxylan esterase / glucomannan deacetylase (360 aa).

A signal peptide spans 1–21; it reads MKPHALIGLLAGMLLSSSLYA. Catalysis depends on serine 151, which acts as the Nucleophile.

The protein belongs to the carbohydrate esterase 2 (CE2) family.

It localises to the secreted. The enzyme catalyses Deacetylation of xylans and xylo-oligosaccharides.. It participates in glycan degradation; xylan degradation. Involved in the degradation of plant cell wall polysaccharides. Catalyzes the deacetylation of acetylated birchwood xylan and glucomannan, with a large preference for the latter, and of the synthetic substrate 4-nitrophenyl acetate (4-NPAc). The sequence is that of Acetylxylan esterase / glucomannan deacetylase from Cellvibrio japonicus (strain Ueda107) (Pseudomonas fluorescens subsp. cellulosa).